Consider the following 142-residue polypeptide: Large ribosomal subunit protein uL11 (142 aa).

The protein belongs to the universal ribosomal protein uL11 family. As to quaternary structure, part of the ribosomal stalk of the 50S ribosomal subunit. Interacts with L10 and the large rRNA to form the base of the stalk. L10 forms an elongated spine to which L12 dimers bind in a sequential fashion forming a multimeric L10(L12)X complex. One or more lysine residues are methylated.

In terms of biological role, forms part of the ribosomal stalk which helps the ribosome interact with GTP-bound translation factors. In Vibrio cholerae serotype O1 (strain ATCC 39541 / Classical Ogawa 395 / O395), this protein is Large ribosomal subunit protein uL11.